A 302-amino-acid polypeptide reads, in one-letter code: UDP-N-acetylenolpyruvoylglucosamine reductase (302 aa).

Residues 31-210 form the FAD-binding PCMH-type domain; that stretch reads IGGQTKVYFR…ENEVLELKKK (180 aa). Residue Arg175 is part of the active site. The active-site Proton donor is Ser224. The active site involves Glu297.

Belongs to the MurB family. FAD serves as cofactor.

Its subcellular location is the cytoplasm. It catalyses the reaction UDP-N-acetyl-alpha-D-muramate + NADP(+) = UDP-N-acetyl-3-O-(1-carboxyvinyl)-alpha-D-glucosamine + NADPH + H(+). It participates in cell wall biogenesis; peptidoglycan biosynthesis. In terms of biological role, cell wall formation. The polypeptide is UDP-N-acetylenolpyruvoylglucosamine reductase (Pelagibacter ubique (strain HTCC1062)).